A 341-amino-acid chain; its full sequence is MTKDILILAVETSCDETSVSVIKNGRDILSNTVLSQIESHKRFGGVVPEVASRHHVEGITTTINEALVDADVSMEDIDAIAVTEGPGLIGALLIGVNAAKALAFAYDKPLIPVHHIAGHIYANHIEEPLTFPLIALIVSGGHTELVYMKDHLTFEVIGETRDDAVGEAYDKVARTIGLNYPGGPQVDRLAAEGEDTYSFPRVWLDKDSYDFSFSGLKSAVINQLHNQRQKNIPIIEANVATSFQNSVVEVLTFKAIQACKEYGVQRLIVAGGVASNKGLRQSLADQCKVNDIQLTIPSPKLCTDNAAMIGVAGHYLYQQGRFADLALNGHSNIDLEEYSAE.

The Fe cation site is built by histidine 115 and histidine 119. Residues 137-141, aspartate 170, glycine 183, aspartate 187, and asparagine 276 contribute to the substrate site; that span reads IVSGG. Aspartate 304 serves as a coordination point for Fe cation.

It belongs to the KAE1 / TsaD family. It depends on Fe(2+) as a cofactor.

The protein resides in the cytoplasm. The enzyme catalyses L-threonylcarbamoyladenylate + adenosine(37) in tRNA = N(6)-L-threonylcarbamoyladenosine(37) in tRNA + AMP + H(+). Required for the formation of a threonylcarbamoyl group on adenosine at position 37 (t(6)A37) in tRNAs that read codons beginning with adenine. Is involved in the transfer of the threonylcarbamoyl moiety of threonylcarbamoyl-AMP (TC-AMP) to the N6 group of A37, together with TsaE and TsaB. TsaD likely plays a direct catalytic role in this reaction. The sequence is that of tRNA N6-adenosine threonylcarbamoyltransferase from Staphylococcus aureus (strain MRSA252).